The chain runs to 276 residues: Diaminopimelate epimerase (276 aa).

3 residues coordinate substrate: Asn13, Gln46, and Asn66. Residue Cys75 is the Proton donor of the active site. Residues 76 to 77 (GN), Asn159, Asn192, and 210 to 211 (ER) each bind substrate. The active-site Proton acceptor is the Cys219. 220–221 (GS) contributes to the substrate binding site.

Belongs to the diaminopimelate epimerase family. As to quaternary structure, homodimer.

The protein localises to the cytoplasm. The enzyme catalyses (2S,6S)-2,6-diaminopimelate = meso-2,6-diaminopimelate. Its pathway is amino-acid biosynthesis; L-lysine biosynthesis via DAP pathway; DL-2,6-diaminopimelate from LL-2,6-diaminopimelate: step 1/1. Functionally, catalyzes the stereoinversion of LL-2,6-diaminopimelate (L,L-DAP) to meso-diaminopimelate (meso-DAP), a precursor of L-lysine and an essential component of the bacterial peptidoglycan. The polypeptide is Diaminopimelate epimerase (Coxiella burnetii (strain CbuK_Q154) (Coxiella burnetii (strain Q154))).